The sequence spans 335 residues: NADH-quinone oxidoreductase subunit H (335 aa).

Helical transmembrane passes span Val11–Leu31, Val81–Ile101, Ile114–Gly134, Val154–Phe174, Leu187–Val207, Phe238–Phe258, Gln270–Leu290, and Trp307–Trp327.

This sequence belongs to the complex I subunit 1 family. NDH-1 is composed of 13 different subunits. Subunits NuoA, H, J, K, L, M, N constitute the membrane sector of the complex.

The protein resides in the cell inner membrane. The catalysed reaction is a quinone + NADH + 5 H(+)(in) = a quinol + NAD(+) + 4 H(+)(out). In terms of biological role, NDH-1 shuttles electrons from NADH, via FMN and iron-sulfur (Fe-S) centers, to quinones in the respiratory chain. The immediate electron acceptor for the enzyme in this species is believed to be ubiquinone. Couples the redox reaction to proton translocation (for every two electrons transferred, four hydrogen ions are translocated across the cytoplasmic membrane), and thus conserves the redox energy in a proton gradient. This subunit may bind ubiquinone. The chain is NADH-quinone oxidoreductase subunit H from Pseudomonas fluorescens (strain Pf0-1).